Consider the following 140-residue polypeptide: Granulocyte-macrophage colony-stimulating factor (140 aa).

The N-terminal stretch at 1 to 17 is a signal peptide; it reads MWLQNLLLLGTVVCSIC. Residue S24 is glycosylated (O-linked (GalNAc...) serine). Residue T27 is glycosylated (O-linked (GalNAc...) threonine). 3 N-linked (GlcNAc...) asparagine glycosylation sites follow: N45, N55, and N87. Cystine bridges form between C72–C114 and C106–C139.

It belongs to the GM-CSF family. In terms of assembly, monomer. The signaling GM-CSF receptor complex is a dodecamer of two head-to-head hexamers of two alpha, two beta, and two ligand subunits.

It is found in the secreted. In terms of biological role, cytokine that stimulates the growth and differentiation of hematopoietic precursor cells from various lineages, including granulocytes, macrophages, eosinophils and erythrocytes. This chain is Granulocyte-macrophage colony-stimulating factor (CSF2), found in Cavia porcellus (Guinea pig).